The sequence spans 467 residues: 3-isopropylmalate dehydratase large subunit (467 aa).

[4Fe-4S] cluster-binding residues include cysteine 347, cysteine 407, and cysteine 410.

Belongs to the aconitase/IPM isomerase family. LeuC type 1 subfamily. As to quaternary structure, heterodimer of LeuC and LeuD. Requires [4Fe-4S] cluster as cofactor.

It carries out the reaction (2R,3S)-3-isopropylmalate = (2S)-2-isopropylmalate. Its pathway is amino-acid biosynthesis; L-leucine biosynthesis; L-leucine from 3-methyl-2-oxobutanoate: step 2/4. Catalyzes the isomerization between 2-isopropylmalate and 3-isopropylmalate, via the formation of 2-isopropylmaleate. The sequence is that of 3-isopropylmalate dehydratase large subunit from Trichormus variabilis (strain ATCC 29413 / PCC 7937) (Anabaena variabilis).